Consider the following 44-residue polypeptide: Large ribosomal subunit protein bL34 (44 aa).

Belongs to the bacterial ribosomal protein bL34 family.

The sequence is that of Large ribosomal subunit protein bL34 from Wolbachia pipientis wMel.